A 163-amino-acid chain; its full sequence is 2-C-methyl-D-erythritol 2,4-cyclodiphosphate synthase (163 aa).

A divalent metal cation-binding residues include Asp-8 and His-10. 4-CDP-2-C-methyl-D-erythritol 2-phosphate-binding positions include 8 to 10 (DVH) and 34 to 35 (HS). Residue His-42 coordinates a divalent metal cation. 4-CDP-2-C-methyl-D-erythritol 2-phosphate-binding positions include 56 to 58 (DIG), 132 to 135 (TTTE), Phe-139, and Arg-142.

This sequence belongs to the IspF family. As to quaternary structure, homotrimer. A divalent metal cation is required as a cofactor.

It carries out the reaction 4-CDP-2-C-methyl-D-erythritol 2-phosphate = 2-C-methyl-D-erythritol 2,4-cyclic diphosphate + CMP. Its pathway is isoprenoid biosynthesis; isopentenyl diphosphate biosynthesis via DXP pathway; isopentenyl diphosphate from 1-deoxy-D-xylulose 5-phosphate: step 4/6. Functionally, involved in the biosynthesis of isopentenyl diphosphate (IPP) and dimethylallyl diphosphate (DMAPP), two major building blocks of isoprenoid compounds. Catalyzes the conversion of 4-diphosphocytidyl-2-C-methyl-D-erythritol 2-phosphate (CDP-ME2P) to 2-C-methyl-D-erythritol 2,4-cyclodiphosphate (ME-CPP) with a corresponding release of cytidine 5-monophosphate (CMP). This is 2-C-methyl-D-erythritol 2,4-cyclodiphosphate synthase from Moorella thermoacetica (strain ATCC 39073 / JCM 9320).